We begin with the raw amino-acid sequence, 447 residues long: MGFKYLKIKNPKVILTEWIPFGKNYMTEFIDRITLKEYQRKRIKYFTASERRDIRYKAVFETSEYQTTVNIIEFIPETSVKFTAEIIGERKKDVFIYVDYLGRCIYSSEITKAGDEEEIVSLDNLSFVIPDLILDSSRIMSHLISPPQRYLLETLYGEIKVYKHVTVLTETVVNIDENTILEISQVIGAVKNIIEIDDGLIIFGDFGIFISHKNPEKFEKFIYYYPFIRSITGVSRDLFFKLNNIASKLEVISNTLASGVDLEDITEIRGELSRIDRELAVIEIVCGYLKEIVEFLNSSYPPNFGDFDLMILEKVEAERKLRRLIYRIAEIENILKSNDSLATSLTRLLTTISEDLERKIANQLAENTKYQVAIGEAMEVLEIGIFGVYALEAAHILLLTSGKDEILHHIKILGFPLEFWIILVVTILGVYVGKIVIEYRKKKVLGE.

Helical transmembrane passes span 380 to 400 and 412 to 432; these read VLEIGIFGVYALEAAHILLLT and ILGFPLEFWIILVVTILGVYV.

It is found in the cell membrane. This is an uncharacterized protein from Methanocaldococcus jannaschii (strain ATCC 43067 / DSM 2661 / JAL-1 / JCM 10045 / NBRC 100440) (Methanococcus jannaschii).